Consider the following 87-residue polypeptide: Type 3 secretion system needle filament protein (87 aa).

Belongs to the SctF family. As to quaternary structure, the core secretion machinery of the T3SS is composed of approximately 20 different proteins, including cytoplasmic components, a base, an export apparatus and a needle. This subunit polymerizes and forms the helical needle filament. Forms high-order oligomers in vitro. Forms a stable ternary complex with the YscE-YscG chaperone. Interacts directly with YscG but makes very little direct contact with YscE. Interacts with the needle adapter protein YscI/SctI.

The protein resides in the secreted. The protein localises to the cell surface. With respect to regulation, the secretion and/or polymerization may be controlled by the type III secretion system regulator YopR. Interaction with YscE-YscG chaperone prevents premature polymerization of YscF/SctF in the bacterial cytosol and is required for its stability and efficient secretion. Interaction with the needle adapter protein YscI/SctI is required for YscF/SctF secretion, needle assembly and Yop secretion. The N-terminus varies among bacterial species, not only in amino acid composition but also in the number of amino acids, and may function in manipulating the host response to the advantage of the bacteria. In Y.pestis, the N-terminus can function to decrease cytokine induction, perhaps contributing to a favorable immune environment leading to survival of Y.pestis within the eukaryotic host. Its function is as follows. Component of the type III secretion system (T3SS), also called injectisome, which is used to inject bacterial effector proteins into eukaryotic host cells. YscF/SctF forms the external needle filament that protrudes from the bacterial surface. Essential for the calcium-dependent regulation of T3SS and Yop secretion. Required to block Yop secretion in the presence of extracellular calcium. May be the extracellular T3SS component that senses extracellular calcium and/or participates in transmitting the calcium signal to the cytoplasmic compartment where the block in secretion is initiated. During infection, can induce innate immune responses. The needle proteins interact with host TLR2 or TLR4, and induce signaling by NF-kappa-B and/or AP-1. This activation is MyD88 dependent and results in increased expression of cytokines, including TNF-alpha, IL-6 and IL-8. Innate immune responses are modulated by the N-terminal region of YscF/SctF. This is Type 3 secretion system needle filament protein from Yersinia pestis.